Consider the following 408-residue polypeptide: Serine/threonine transporter SstT (408 aa).

10 helical membrane passes run 15–35, 49–69, 85–105, 142–162, 192–212, 218–238, 246–268, 289–309, 317–337, and 362–382; these read MGLI…AVIW, FISA…TAAI, LLYV…SFVF, ALME…GLML, PLGI…GALL, LAVI…LIVF, YPLV…SSAA, ISIP…ISVI, LGIP…SIAA, and TEVA…QDST.

It belongs to the dicarboxylate/amino acid:cation symporter (DAACS) (TC 2.A.23) family.

The protein resides in the cell inner membrane. It carries out the reaction L-serine(in) + Na(+)(in) = L-serine(out) + Na(+)(out). The enzyme catalyses L-threonine(in) + Na(+)(in) = L-threonine(out) + Na(+)(out). Involved in the import of serine and threonine into the cell, with the concomitant import of sodium (symport system). This is Serine/threonine transporter SstT from Marinobacter nauticus (strain ATCC 700491 / DSM 11845 / VT8) (Marinobacter aquaeolei).